Reading from the N-terminus, the 376-residue chain is Lateral eye opsin (376 aa).

Over 1-46 (MANQLSYSSLGWPYQPNASVVDTMPKEMLYMIHEHWYAFPPMNPLW) the chain is Extracellular. N-linked (GlcNAc...) asparagine glycosylation is present at asparagine 17. Residues 47–71 (YSILGVAMIILGIICVLGNGMVIYL) traverse the membrane as a helical segment. The Cytoplasmic segment spans residues 72–83 (MMTTKSLRTPTN). Residues 84 to 108 (LLVVNLAFSDFCMMAFMMPTMTSNC) form a helical membrane-spanning segment. Topologically, residues 109 to 123 (FAETWILGPFMCEVY) are extracellular. A disulfide bond links cysteine 120 and cysteine 197. The helical transmembrane segment at 124 to 143 (GMAGSLFGCASIWSMVMITL) threads the bilayer. Residues 144 to 162 (DRYNVIVRGMAAAPLTHKK) are Cytoplasmic-facing. The helical transmembrane segment at 163-186 (ATLLLLFVWIWSGGWTILPFFGWS) threads the bilayer. Over 187–210 (RYVPEGNLTSCTVDYLTKDWSSAS) the chain is Extracellular. N-linked (GlcNAc...) asparagine glycosylation occurs at asparagine 193. Residues 211 to 238 (YVVIYGLAVYFLPLITMIYCYFFIVHAV) form a helical membrane-spanning segment. Residues 239–274 (AEHEKQLREQAKKMNVASLRANADQQKQSAECRLAK) lie on the Cytoplasmic side of the membrane. Residues 275–298 (VAMMTVGLWFMAWTPYLIISWAGV) form a helical membrane-spanning segment. Topologically, residues 299–306 (FSSGTRLT) are extracellular. A helical transmembrane segment spans residues 307 to 331 (PLATIWGSVFAKANSCYNPIVYGIS). N6-(retinylidene)lysine is present on lysine 318. Residues 332–376 (HPRYKAALYQRFPSLACGSGESGSDVKSEASATTTMEEKPKIPEA) lie on the Cytoplasmic side of the membrane. Residues 349-376 (GSGESGSDVKSEASATTTMEEKPKIPEA) form a disordered region. Residues 367–376 (MEEKPKIPEA) show a composition bias toward basic and acidic residues.

The protein belongs to the G-protein coupled receptor 1 family. Opsin subfamily. Post-translationally, phosphorylated on some or all of the serine and threonine residues present in the C-terminal region. In terms of tissue distribution, lateral eye.

The protein resides in the membrane. Its function is as follows. Visual pigments are the light-absorbing molecules that mediate vision. They consist of an apoprotein, opsin, covalently linked to cis-retinal. This Limulus polyphemus (Atlantic horseshoe crab) protein is Lateral eye opsin.